A 287-amino-acid polypeptide reads, in one-letter code: Festuclavine synthase I (287 aa).

This sequence belongs to the fgaFS/easG family.

It carries out the reaction festuclavine + NAD(+) = 6,8-dimethyl-6,7-didehydroergoline + NADH + H(+). Its pathway is alkaloid biosynthesis; ergot alkaloid biosynthesis. Functionally, festuclavine synthase; part of the gene cluster that mediates the biosynthesis of isofumigaclavines, fungal ergot alkaloids. The tryptophan dimethylallyltransferase ifgA catalyzes the first step of ergot alkaloid biosynthesis by condensing dimethylallyl diphosphate (DMAP) and tryptophan to form 4-dimethylallyl-L-tryptophan. The second step is catalyzed by the methyltransferase ifgB that methylates 4-dimethylallyl-L-tryptophan in the presence of S-adenosyl-L-methionine, resulting in the formation of N-methyl-dimethylallyl-L-tryptophan. The catalase ifgD and the FAD-dependent oxidoreductase ifgC then transform N-methyl-dimethylallyl-L-tryptophan to chanoclavine-I which is further oxidized by ifgE in the presence of NAD(+), resulting in the formation of chanoclavine-I aldehyde. The chanoclavine-I aldehyde reductases ifgG and/or fgaOx3 reduce chanoclavine-I aldehyde to dihydrochanoclavine-I aldehyde that spontaneously dehydrates to form 6,8-dimethyl-6,7-didehydroergoline. The festuclavine dehydrogenases ifgF1 and/or ifgF2 then catalyze the reduction of 6,8-dimethyl-6,7-didehydroergoline to form festuclavine. Hydrolysis of festuclavine by a yet undetermined cytochrome P450 monooxygenase (called ifgH) then leads to the formation of isofumigaclavine B which is in turn acetylated by ifgI to isofumigaclavine A. Penicillium roqueforti has interestingly at least two sets of genes for the consumption of chanoclavine-I aldehyde on three different loci, the OYEs ifgG/fgaOx3 and the festuclavine synthase homologs ifgF1/ifgF2. The reason for the duplication of these genes is unclear, probably to ensure the conversion of chanoclavine-I aldehyde by differential gene expression under various environmental conditions. In Penicillium roqueforti (strain FM164), this protein is Festuclavine synthase I.